A 335-amino-acid chain; its full sequence is 2-acylglycerol O-acyltransferase 2 (335 aa).

2 helical membrane-spanning segments follow: residues 24-44 and 104-124; these read WAVS…LLLF and YIMG…NFCT. Asparagine 206 carries N-linked (GlcNAc...) asparagine glycosylation.

Belongs to the diacylglycerol acyltransferase family.

The protein resides in the endoplasmic reticulum membrane. The protein localises to the cytoplasm. Its subcellular location is the perinuclear region. It catalyses the reaction a 2-acylglycerol + an acyl-CoA = a 1,2-diacylglycerol + CoA. The enzyme catalyses a 2-acylglycerol + an acyl-CoA = a 1,2-diacyl-sn-glycerol + CoA. It carries out the reaction a 2-acylglycerol + an acyl-CoA = a 2,3-diacyl-sn-glycerol + CoA. The catalysed reaction is a 1-acylglycerol + an acyl-CoA = a 1,2-diacylglycerol + CoA. It catalyses the reaction a 1-acylglycerol + an acyl-CoA = a 1,3-diacylglycerol + CoA. The enzyme catalyses 1-O-alkylglycerol + an acyl-CoA = 1-O-alkyl-3-acylglycerol + CoA. It carries out the reaction an acyl-CoA + a 1,2-diacyl-sn-glycerol = a triacyl-sn-glycerol + CoA. It functions in the pathway glycerolipid metabolism; triacylglycerol biosynthesis. Its function is as follows. Involved in glycerolipid synthesis and lipid metabolism. Catalyzes the formation of diacylglycerol, the precursor of triacylglycerol, by transferring the acyl chain of a fatty acyl-CoA to a monoacylglycerol. Plays a central role in absorption of dietary fat in the small intestine by catalyzing the resynthesis of triacylglycerol in enterocytes. Has a preference toward monoacylglycerols containing unsaturated fatty acids in an order of C18:3 &gt; C18:2 &gt; C18:1 &gt; C18:0 at sn-2. Able to use 1-monoalkylglycerol (1-MAkG, 1-O-alkylglycerol) as an acyl acceptor for the synthesis of monoalkyl-monoacylglycerol (MAMAG, 1-O-alkyl-3-acylglycerol or 1-O-alkyl-2-acylglycerol) and subsequently, with lower efficiency, may add another acyl chain producing monoalkyl-diacylglycerol (MADAG, 1-O-alkyl-2,3-diacylglycerol). Possesses weak but significant activity with diacylglycerol as substrate, producing triacylglycerol (triacyl-sn-glycerol). The sequence is that of 2-acylglycerol O-acyltransferase 2 (mogat2) from Xenopus tropicalis (Western clawed frog).